A 310-amino-acid polypeptide reads, in one-letter code: Ribosomal RNA small subunit methyltransferase H (310 aa).

S-adenosyl-L-methionine contacts are provided by residues 33–35 (GGH), D52, F79, D98, and Q105.

Belongs to the methyltransferase superfamily. RsmH family.

The protein localises to the cytoplasm. It carries out the reaction cytidine(1402) in 16S rRNA + S-adenosyl-L-methionine = N(4)-methylcytidine(1402) in 16S rRNA + S-adenosyl-L-homocysteine + H(+). Functionally, specifically methylates the N4 position of cytidine in position 1402 (C1402) of 16S rRNA. The polypeptide is Ribosomal RNA small subunit methyltransferase H (Campylobacter jejuni subsp. jejuni serotype O:6 (strain 81116 / NCTC 11828)).